A 348-amino-acid chain; its full sequence is Succinoglycan biosynthesis protein ExoO (348 aa).

Positions 322–348 (HSAPRAAPVTAAAERSPLGNDPRISKG) are disordered. Positions 324 to 334 (APRAAPVTAAA) are enriched in low complexity.

Belongs to the glycosyltransferase 2 family.

It localises to the cytoplasm. The protein operates within glycan metabolism; exopolysaccharide biosynthesis. In terms of biological role, glycosyltransferase required for the synthesis of succinoglycan (EPS I). Needed for the addition of the fifth sugar (glucose), catalyzes the formation of a beta-1,6 linkage between the fourth and fifth sugar. This is Succinoglycan biosynthesis protein ExoO (exoO) from Rhizobium meliloti (strain 1021) (Ensifer meliloti).